A 625-amino-acid chain; its full sequence is Chaperone protein HtpG (625 aa).

The segment at 1 to 337 (MSTNQETRGF…TNDLPLNVSR (337 aa)) is a; substrate-binding. The segment at 338–554 (EILQENKITA…NDEMTTQMAK (217 aa)) is b. Residues 555 to 625 (LFAAMGQKAP…FIKRMNKLLG (71 aa)) form a c region.

This sequence belongs to the heat shock protein 90 family. Homodimer.

Its subcellular location is the cytoplasm. Functionally, molecular chaperone. Has ATPase activity. The sequence is that of Chaperone protein HtpG from Actinobacillus pleuropneumoniae serotype 5b (strain L20).